Consider the following 1482-residue polypeptide: Glutamate receptor ionotropic, NMDA 2B (1482 aa).

A signal peptide spans M1 to A26. The Extracellular segment spans residues R27 to D557. An N-linked (GlcNAc...) asparagine glycan is attached at N74. The cysteines at positions 86 and 321 are disulfide-linked. Zn(2+) contacts are provided by H127 and E284. N-linked (GlcNAc...) asparagine glycosylation is found at N341, N348, N444, and N491. Intrachain disulfides connect C429/C456 and C436/C457. The L-glutamate site is built by T514 and R519. A glycan (N-linked (GlcNAc...) asparagine) is linked at N542. A helical membrane pass occupies residues V558 to V576. Topologically, residues F577–G603 are cytoplasmic. Positions K604–P623 form an intramembrane region, discontinuously helical. Residues K604–P623 are pore-forming. The Cytoplasmic portion of the chain corresponds to K624–I630. Residues M631–Y646 traverse the membrane as a helical segment. The Extracellular segment spans residues T647 to N817. A glycan (N-linked (GlcNAc...) asparagine) is linked at N688. S690, T691, and D732 together coordinate L-glutamate. C746 and C801 are oxidised to a cystine. A helical transmembrane segment spans residues M818–I837. The Cytoplasmic segment spans residues C838–V1482. S882, S886, S917, and S920 each carry phosphoserine. 2 positions are modified to phosphotyrosine: Y962 and Y1039. Phosphoserine is present on residues S1058, S1061, and S1064. Phosphotyrosine occurs at positions 1109 and 1133. The residue at position 1143 (S1143) is a Phosphoserine. Phosphotyrosine is present on Y1155. The tract at residues D1161–P1194 is disordered. 2 positions are modified to phosphoserine: S1255 and S1259. The interval P1269–Q1301 is disordered. Residues V1272–K1289 are compositionally biased toward polar residues. The segment covering A1290–Q1301 has biased composition (basic residues). The interaction with DAPK1 stretch occupies residues K1292–Y1304. S1303 is modified (phosphoserine). Y1472 is subject to Phosphotyrosine. Positions S1480–V1482 match the PDZ-binding motif.

The protein belongs to the glutamate-gated ion channel (TC 1.A.10.1) family. NR2B/GRIN2B subfamily. Heterotetramer. Forms heterotetrameric channels composed of two GluN1/zeta subunits (GRIN1), and two identical GluN2/epsilon subunits (GRIN2A, GRIN2B, GRIN2C or GRIN2D) or GluN3 subunits (GRIN3A or GRIN3B) (in vitro). Can also form heterotetrameric channels that contain at least two GluN1 subunits and at least two different GluN2 subunits (or a combination of one GluN2 and one GluN3 subunits) (in vitro). In vivo, the subunit composition may depend on the expression levels of the different subunits. Found in a complex with GRIN1, GRIN3A and PPP2CB. Found in a complex with GRIN1 and GRIN3B. Interacts with MAGI3. Interacts with HIP1 and NETO1. Interacts with PDZ domains of PATJ, DLG3 and DLG4. Interacts with DAPK1. Found in a complex with GRIN1 and PRR7. Interacts with PRR7. Interacts with CAMK2A. Interacts with ARC; preventing ARC oligomerization. Interacts with TMEM25. Interacts (via the extreme C-terminus) with FRMPD2 (via the second PDZ domain); the interaction is direct and is likely to promote NMDAR-mediated neural signal transmission. Interacts with FAM81A; the interaction facilitates condensate formation via liquid-liquid phase separation. Phosphorylated on tyrosine residues. Phosphorylation at Ser-1303 by DAPK1 enhances synaptic NMDA receptor channel activity. In terms of tissue distribution, expressed in the hippocampus including the dentate gyrus (at protein level). Detected in adult olfactory bulb, brain cortex, hippocampus, striatum, thalamus, superior colliculus, with much lower levels in inferior colliculus, midbrain and cerebellum.

It is found in the cell membrane. The protein resides in the postsynaptic cell membrane. It localises to the late endosome. The protein localises to the lysosome. Its subcellular location is the cytoplasm. It is found in the cytoskeleton. It catalyses the reaction Ca(2+)(in) = Ca(2+)(out). It carries out the reaction Na(+)(in) = Na(+)(out). The catalysed reaction is K(+)(in) = K(+)(out). Its activity is regulated as follows. NMDA glutamate receptor activity is inhibited by micromolar levels of zinc ions. NMDA glutamate receptor activity is inhibited by ifenprodil. Functionally, component of N-methyl-D-aspartate (NMDA) receptors (NMDARs) that function as heterotetrameric, ligand-gated cation channels with high calcium permeability and voltage-dependent block by Mg(2+). Participates in synaptic plasticity for learning and memory formation by contributing to the long-term depression (LTD) of hippocampus membrane currents. Channel activation requires binding of the neurotransmitter L-glutamate to the GluN2 subunit, glycine or D-serine binding to the GluN1 subunit, plus membrane depolarization to eliminate channel inhibition by Mg(2+). NMDARs mediate simultaneously the potasium efflux and the influx of calcium and sodium. Each GluN2 subunit confers differential attributes to channel properties, including activation, deactivation and desensitization kinetics, pH sensitivity, Ca2(+) permeability, and binding to allosteric modulators. In concert with DAPK1 at extrasynaptic sites, acts as a central mediator for stroke damage. Its phosphorylation at Ser-1303 by DAPK1 enhances synaptic NMDA receptor channel activity inducing injurious Ca2+ influx through them, resulting in an irreversible neuronal death. In Rattus norvegicus (Rat), this protein is Glutamate receptor ionotropic, NMDA 2B.